Consider the following 479-residue polypeptide: Muscarinic acetylcholine receptor M4 (479 aa).

The Extracellular portion of the chain corresponds to 1–30; that stretch reads MANFTPVNGSSANQSVRLVTTAHNHLETVE. Asparagine 8 and asparagine 13 each carry an N-linked (GlcNAc...) asparagine glycan. The chain crosses the membrane as a helical span at residues 31-53; that stretch reads MVFIATVTGSLSLVTVVGNILVM. The Cytoplasmic segment spans residues 54-67; sequence LSIKVNRQLQTVNN. The helical transmembrane segment at 68 to 88 threads the bilayer; that stretch reads YFLFSLACADLIIGAFSMNLY. At 89–105 the chain is on the extracellular side; sequence TLYIIKGYWPLGAVVCD. Residues cysteine 104 and cysteine 184 are joined by a disulfide bond. A helical transmembrane segment spans residues 106-127; it reads LWLALDYVVSNASVMNLLIISF. Residues 128–147 lie on the Cytoplasmic side of the membrane; sequence DRYFCVTKPLTYPARRTTKM. A helical membrane pass occupies residues 148–170; that stretch reads AGLMIAAAWVLSFVLWAPAILFW. At 171–192 the chain is on the extracellular side; it reads QFVVGKRTVPDNQCFIQFLSNP. A helical transmembrane segment spans residues 193-215; it reads AVTFGTAIAAFYLPVVIMTVLYI. Residues 216–401 lie on the Cytoplasmic side of the membrane; it reads HISLASRSRV…AARERKVTRT (186 aa). The tract at residues 271–334 is disordered; sequence LEEAPPPALP…APTLQPRTLN (64 aa). Residues 274-285 are compositionally biased toward pro residues; that stretch reads APPPALPPPPRP. The span at 293–303 shows a compositional bias: polar residues; sequence NESSSGSATQN. Low complexity predominate over residues 310 to 333; the sequence is TELSTTEAATTPALPAPTLQPRTL. The helical transmembrane segment at 402 to 422 threads the bilayer; sequence IFAILLAFILTWTPYNVMVLV. Residues 423 to 436 lie on the Extracellular side of the membrane; that stretch reads NTFCQSCIPERVWS. The helical transmembrane segment at 437–456 threads the bilayer; that stretch reads IGYWLCYVNSTINPACYALC. The Cytoplasmic portion of the chain corresponds to 457 to 479; the sequence is NATFKKTFRHLLLCQYRNIGTAR. Threonine 459, threonine 463, and threonine 477 each carry phosphothreonine.

It belongs to the G-protein coupled receptor 1 family. Muscarinic acetylcholine receptor subfamily. CHRM4 sub-subfamily.

The protein resides in the cell membrane. The protein localises to the postsynaptic cell membrane. The muscarinic acetylcholine receptor mediates various cellular responses, including inhibition of adenylate cyclase, breakdown of phosphoinositides and modulation of potassium channels through the action of G proteins. Primary transducing effect is inhibition of adenylate cyclase. The protein is Muscarinic acetylcholine receptor M4 (Chrm4) of Mus musculus (Mouse).